Reading from the N-terminus, the 261-residue chain is Serine/arginine-rich splicing factor 12 (261 aa).

Residues 10 to 88 (TSLFIRNVAD…RQIEIQFAQG (79 aa)) form the RRM domain. Residues 86 to 261 (AQGDRKTPGQ…SRSYRHKNSW (176 aa)) form a disordered region. The segment covering 88–109 (GDRKTPGQMKSKERHPCSPSDH) has biased composition (basic and acidic residues). Composition is skewed to basic residues over residues 110 to 122 (RRSR…RTRS) and 178 to 191 (GRSR…RSKS). Residues 192 to 209 (IGKSQSSSPQKQTSSGTK) show a composition bias toward low complexity. Residues 230-239 (GYTNSETKVQ) show a composition bias toward polar residues. A compositionally biased stretch (basic residues) spans 240–261 (TAKHSHFRSHSRSRSYRHKNSW).

Belongs to the splicing factor SR family. As to expression, expressed in testis.

Its subcellular location is the nucleus. In terms of biological role, splicing factor that seems to antagonize SR proteins in pre-mRNA splicing regulation. The polypeptide is Serine/arginine-rich splicing factor 12 (SRSF12) (Homo sapiens (Human)).